A 375-amino-acid polypeptide reads, in one-letter code: Thiamine-phosphate synthase (375 aa).

The tract at residues 1 to 127 (MTNAESRTVL…AACIESIRYQ (127 aa)) is unknown. The interval 128 to 375 (CYATFRELEL…SSDVCPLPND (248 aa)) is thiamine-phosphate synthase. 4-amino-2-methyl-5-(diphosphooxymethyl)pyrimidine is bound by residues 183–185 (QLR) and asparagine 215. Residues aspartate 216 and glutamate 235 each coordinate Mg(2+). 2 residues coordinate 4-amino-2-methyl-5-(diphosphooxymethyl)pyrimidine: serine 254 and lysine 283. Position 315 (glycine 315) interacts with 2-[(2R,5Z)-2-carboxy-4-methylthiazol-5(2H)-ylidene]ethyl phosphate.

Belongs to the thiamine-phosphate synthase family. Mg(2+) serves as cofactor.

It carries out the reaction 2-[(2R,5Z)-2-carboxy-4-methylthiazol-5(2H)-ylidene]ethyl phosphate + 4-amino-2-methyl-5-(diphosphooxymethyl)pyrimidine + 2 H(+) = thiamine phosphate + CO2 + diphosphate. The enzyme catalyses 2-(2-carboxy-4-methylthiazol-5-yl)ethyl phosphate + 4-amino-2-methyl-5-(diphosphooxymethyl)pyrimidine + 2 H(+) = thiamine phosphate + CO2 + diphosphate. It catalyses the reaction 4-methyl-5-(2-phosphooxyethyl)-thiazole + 4-amino-2-methyl-5-(diphosphooxymethyl)pyrimidine + H(+) = thiamine phosphate + diphosphate. Its pathway is cofactor biosynthesis; thiamine diphosphate biosynthesis; thiamine phosphate from 4-amino-2-methyl-5-diphosphomethylpyrimidine and 4-methyl-5-(2-phosphoethyl)-thiazole: step 1/1. In terms of biological role, condenses 4-methyl-5-(beta-hydroxyethyl)thiazole monophosphate (THZ-P) and 2-methyl-4-amino-5-hydroxymethyl pyrimidine pyrophosphate (HMP-PP) to form thiamine monophosphate (TMP). This Rhodopirellula baltica (strain DSM 10527 / NCIMB 13988 / SH1) protein is Thiamine-phosphate synthase (thiE).